The sequence spans 362 residues: MTQNYRITLLPGDGIGPEIMAVAVDVLKVVGQQFDIQFDFQEALIGGAAIDATGEPLPSATLDTCRHSDAVLLAAIGGYKWDSLPPHQRPEGGLLGLRAGLELFANLRPAQILPQLIDASTLKREVVEGVDIMVVRELTGGIYFGKPRGIFTTETGEKRGVNTMVYTESEIDRIGRIAFETARKRRGKLCSVDKANVLDVSQLWRDRITNLSQEYPDVELSHLYVDNAAMQLVRAPKQFDTIVTGNLFGDILSDAAAMLTGSIGMLPSASLGASGPGVFEPVHGSAPDIAGQDKANPLAQVLSAAMMLRYALDQPQAADKIEQAVLQVLEQGDRTGDIISVGMNLLGCRGMGDSLIKALAKS.

78 to 91 (GYKWDSLPPHQRPE) contacts NAD(+). R98, R108, R136, and D226 together coordinate substrate. Residues D226, D250, and D254 each coordinate Mg(2+). 284-296 (GSAPDIAGQDKAN) serves as a coordination point for NAD(+).

It belongs to the isocitrate and isopropylmalate dehydrogenases family. LeuB type 1 subfamily. As to quaternary structure, homodimer. The cofactor is Mg(2+). Mn(2+) is required as a cofactor.

The protein resides in the cytoplasm. The catalysed reaction is (2R,3S)-3-isopropylmalate + NAD(+) = 4-methyl-2-oxopentanoate + CO2 + NADH. Its pathway is amino-acid biosynthesis; L-leucine biosynthesis; L-leucine from 3-methyl-2-oxobutanoate: step 3/4. Catalyzes the oxidation of 3-carboxy-2-hydroxy-4-methylpentanoate (3-isopropylmalate) to 3-carboxy-4-methyl-2-oxopentanoate. The product decarboxylates to 4-methyl-2 oxopentanoate. This chain is 3-isopropylmalate dehydrogenase, found in Nostoc sp. (strain PCC 7120 / SAG 25.82 / UTEX 2576).